Reading from the N-terminus, the 254-residue chain is Adenosine 5'-phosphosulfate reductase (254 aa).

Cys-131, Cys-132, Cys-212, and Cys-215 together coordinate [4Fe-4S] cluster. Cys-238 serves as the catalytic Nucleophile; cysteine thiosulfonate intermediate.

This sequence belongs to the PAPS reductase family. CysH subfamily. It depends on [4Fe-4S] cluster as a cofactor.

Its subcellular location is the cytoplasm. The catalysed reaction is [thioredoxin]-disulfide + sulfite + AMP + 2 H(+) = adenosine 5'-phosphosulfate + [thioredoxin]-dithiol. It functions in the pathway sulfur metabolism; hydrogen sulfide biosynthesis; sulfite from sulfate. Its function is as follows. Catalyzes the formation of sulfite from adenosine 5'-phosphosulfate (APS) using thioredoxin as an electron donor. The polypeptide is Adenosine 5'-phosphosulfate reductase (Mesorhizobium japonicum (strain LMG 29417 / CECT 9101 / MAFF 303099) (Mesorhizobium loti (strain MAFF 303099))).